Consider the following 38-residue polypeptide: CHH precursor-related peptide (38 aa).

A disordered region spans residues 18–38 (GALEPSTPLGDLSGSLGHPVE).

As to expression, produced by the medulla terminalis X-organ in the eyestalks and transported to the sinus gland where it is stored and released.

The protein resides in the secreted. In Cancer pagurus (Rock crab), this protein is CHH precursor-related peptide.